The chain runs to 156 residues: Large ribosomal subunit protein uL30 (156 aa).

This sequence belongs to the universal ribosomal protein uL30 family. In terms of assembly, part of the 50S ribosomal subunit.

In Thermofilum pendens (strain DSM 2475 / Hrk 5), this protein is Large ribosomal subunit protein uL30.